The sequence spans 407 residues: S-adenosylmethionine synthase (407 aa).

140 to 145 (GQGSAD) provides a ligand contact to ATP.

The protein belongs to the AdoMet synthase 2 family. Mg(2+) serves as cofactor.

The enzyme catalyses L-methionine + ATP + H2O = S-adenosyl-L-methionine + phosphate + diphosphate. Its pathway is amino-acid biosynthesis; S-adenosyl-L-methionine biosynthesis; S-adenosyl-L-methionine from L-methionine: step 1/1. Functionally, catalyzes the formation of S-adenosylmethionine from methionine and ATP. In Methanosphaera stadtmanae (strain ATCC 43021 / DSM 3091 / JCM 11832 / MCB-3), this protein is S-adenosylmethionine synthase.